Here is a 96-residue protein sequence, read N- to C-terminus: Probable quinol oxidase subunit 4 (96 aa).

The next 3 membrane-spanning stretches (helical) occupy residues 8–28, 36–56, and 68–88; these read TVGFIASIVLTILAVFVTLYT, ITIIFGFAFIQAAVQLLMFMH, and FKVLFAIIITLITVIGTYWVM.

Belongs to the cytochrome c oxidase bacterial subunit 4 family.

It is found in the cell membrane. It carries out the reaction 2 a quinol + O2 = 2 a quinone + 2 H2O. In terms of biological role, catalyzes quinol oxidation with the concomitant reduction of oxygen to water. The protein is Probable quinol oxidase subunit 4 (qoxD) of Staphylococcus saprophyticus subsp. saprophyticus (strain ATCC 15305 / DSM 20229 / NCIMB 8711 / NCTC 7292 / S-41).